A 145-amino-acid polypeptide reads, in one-letter code: 3-dehydroquinate dehydratase (145 aa).

Catalysis depends on Y23, which acts as the Proton acceptor. N73, H79, and D86 together coordinate substrate. H99 (proton donor) is an active-site residue. Substrate is bound by residues 100 to 101 and R110; that span reads LS.

It belongs to the type-II 3-dehydroquinase family. Homododecamer.

It catalyses the reaction 3-dehydroquinate = 3-dehydroshikimate + H2O. The protein operates within metabolic intermediate biosynthesis; chorismate biosynthesis; chorismate from D-erythrose 4-phosphate and phosphoenolpyruvate: step 3/7. In terms of biological role, catalyzes a trans-dehydration via an enolate intermediate. This Desulfitobacterium hafniense (strain Y51) protein is 3-dehydroquinate dehydratase.